A 137-amino-acid chain; its full sequence is Cell division protein SepF (137 aa).

Belongs to the SepF family. Homodimer. Interacts with FtsZ.

The protein resides in the cytoplasm. Its function is as follows. Cell division protein that is part of the divisome complex and is recruited early to the Z-ring. Probably stimulates Z-ring formation, perhaps through the cross-linking of FtsZ protofilaments. Its function overlaps with FtsA. This chain is Cell division protein SepF, found in Thermoanaerobacter pseudethanolicus (strain ATCC 33223 / 39E) (Clostridium thermohydrosulfuricum).